Consider the following 1114-residue polypeptide: Zinc finger E-box-binding homeobox 1 (1114 aa).

2 disordered regions span residues 1 to 105 (MADG…EVGC) and 142 to 163 (APEEDQRQGTPEASGQDENGTP). Low complexity predominate over residues 15-30 (PRRNNVTNYNNVIEAN). A compositionally biased stretch (polar residues) spans 149-160 (QGTPEASGQDEN). C2H2-type zinc fingers lie at residues 170 to 193 (LTCPYCDRGYKRFTSLKEHIKYRH), 200 to 222 (FSCSLCSYTFAYRTQLDRHMTSH), and 240 to 262 (FKCTECGKAFKYKHHLKEHLRIH). The segment at 268 to 292 (YECPNCKKRFSHSGSYSSHISSKKC) adopts a C2H2-type 4; atypical zinc-finger fold. Disordered stretches follow at residues 304–326 (SGLKTSQCSSPSLSASPGSPARP), 491–529 (NLKKEHSVPTNSCKNEKLPEDLTVKSEKDKNFEGETNDS), 553–588 (KNPPQLPQSSGTEAEKPSSPAPSETGENNLSPGQPP), and 636–716 (QISV…SRNS). Positions 309–326 (SQCSSPSLSASPGSPARP) are enriched in low complexity. The segment covering 504-523 (KNEKLPEDLTVKSEKDKNFE) has biased composition (basic and acidic residues). 2 stretches are compositionally biased toward polar residues: residues 573 to 584 (APSETGENNLSP) and 636 to 681 (QISV…QNPA). The homeobox; atypical DNA-binding region spans 581 to 640 (NLSPGQPPLKNLLSLLKAYYALNAQPSAEELSKIADSVNLPLDVVKKWFEKMQAGQISVQ). A compositionally biased stretch (low complexity) spans 682-716 (NTSKSQTSSGGSTQNGSRSSTPSPSPLNLSSSRNS). A CTBP-binding motif motif is present at residues 767–771 (PLNLT). Composition is skewed to polar residues over residues 852-866 (AVQETPPKQTQANGS) and 874-890 (SSEGVSNVEDQNDSDST). Residues 852 to 898 (AVQETPPKQTQANGSQDERQDTSSEGVSNVEDQNDSDSTPPKKKMRK) form a disordered region. 2 consecutive C2H2-type zinc fingers follow at residues 904-926 (YACDLCDKIFQKSSSLLRHKYEH) and 932-954 (HECGICKKAFKHKHHLIEHMRLH). The C2H2-type 7; atypical zinc finger occupies 960–981 (YQCDKCGKRFSHSGSYSQHMNH). The interval 989–1114 (EAEERDSTEQ…QVSEEKTNKA (126 aa)) is disordered. The segment covering 1031–1047 (EEEEDSEKEEEEEEEKD) has biased composition (acidic residues). Basic and acidic residues predominate over residues 1048–1062 (VEGLQEEKECRKLQD). Residues 1063–1078 (VEEEEEVEEEEEEEEG) are compositionally biased toward acidic residues. Over residues 1079 to 1089 (KTEGNKNDDVV) the composition is skewed to basic and acidic residues.

Belongs to the delta-EF1/ZFH-1 C2H2-type zinc-finger family. In terms of tissue distribution, expression is developmentally regulated with high expression in mesoderm, nervous system and lens.

It localises to the nucleus. Acts as a transcriptional repressor. Positively regulates neuronal differentiation. Represses transcription by binding to the E box-containing promoter. Binds to delta 1-crystallin enhancer core and represses lens-specific transcription. It also binds many other non-lens specific DNA sequences. This is Zinc finger E-box-binding homeobox 1 (ZEB1) from Gallus gallus (Chicken).